The following is a 143-amino-acid chain: Nucleoside diphosphate kinase (143 aa).

Residues lysine 11, phenylalanine 59, arginine 87, threonine 93, arginine 104, and asparagine 114 each coordinate ATP. Histidine 117 (pros-phosphohistidine intermediate) is an active-site residue.

Belongs to the NDK family. As to quaternary structure, homotetramer. Requires Mg(2+) as cofactor.

Its subcellular location is the cytoplasm. It carries out the reaction a 2'-deoxyribonucleoside 5'-diphosphate + ATP = a 2'-deoxyribonucleoside 5'-triphosphate + ADP. It catalyses the reaction a ribonucleoside 5'-diphosphate + ATP = a ribonucleoside 5'-triphosphate + ADP. Its function is as follows. Major role in the synthesis of nucleoside triphosphates other than ATP. The ATP gamma phosphate is transferred to the NDP beta phosphate via a ping-pong mechanism, using a phosphorylated active-site intermediate. The protein is Nucleoside diphosphate kinase of Shewanella baltica (strain OS223).